A 437-amino-acid polypeptide reads, in one-letter code: Aspartokinase (437 aa).

Belongs to the aspartokinase family.

It carries out the reaction L-aspartate + ATP = 4-phospho-L-aspartate + ADP. The protein operates within amino-acid biosynthesis; L-lysine biosynthesis via DAP pathway; (S)-tetrahydrodipicolinate from L-aspartate: step 1/4. Its pathway is amino-acid biosynthesis; L-methionine biosynthesis via de novo pathway; L-homoserine from L-aspartate: step 1/3. It participates in amino-acid biosynthesis; L-threonine biosynthesis; L-threonine from L-aspartate: step 1/5. The protein is Aspartokinase (lysC) of Chlamydia muridarum (strain MoPn / Nigg).